The primary structure comprises 870 residues: DNA polymerase kappa (870 aa).

One can recognise a UmuC domain in the interval 103–358 (IVHIDMDAFY…LPIRKVSGIG (256 aa)). Residues Asp-107, Asp-198, and Glu-199 each coordinate Mg(2+). 2 consecutive UBZ4-type zinc fingers follow at residues 621–651 (ILTCPVCFRAQGCISLEALNKHVDECLDGPS) and 776–806 (ALVCPVCNVEQKTSDLTLFNVHVDVCLNKSF). The Zn(2+) site is built by Cys-624, Cys-627, His-642, Cys-646, Cys-779, Cys-782, His-797, and Cys-801. The disordered stretch occupies residues 816-858 (NPVNQPKESSRSTGSSSGVQKAVTRTKRPGLMTKYSTSKKIKP).

This sequence belongs to the DNA polymerase type-Y family. Interacts with REV1. Interacts with PCNA. It depends on Mg(2+) as a cofactor. The cofactor is Mn(2+). As to expression, detected at low levels in testis, spleen, prostate and ovary. Detected at very low levels in kidney, colon, brain, heart, liver, lung, placenta, pancreas and peripheral blood leukocytes.

It is found in the nucleus. The catalysed reaction is DNA(n) + a 2'-deoxyribonucleoside 5'-triphosphate = DNA(n+1) + diphosphate. Functionally, DNA polymerase specifically involved in DNA repair. Plays an important role in translesion synthesis, where the normal high-fidelity DNA polymerases cannot proceed and DNA synthesis stalls. Depending on the context, it inserts the correct base, but causes frequent base transitions, transversions and frameshifts. Lacks 3'-5' proofreading exonuclease activity. Forms a Schiff base with 5'-deoxyribose phosphate at abasic sites, but does not have lyase activity. This chain is DNA polymerase kappa (POLK), found in Homo sapiens (Human).